The chain runs to 245 residues: Farnesol dehydrogenase (245 aa).

Residues 11-40 (VTGA…ARRV) and Asp64 contribute to the NAD(+) site. Ser145 contributes to the substrate binding site. Tyr160 (proton acceptor) is an active-site residue. Lys164 contributes to the NAD(+) binding site.

The protein belongs to the short-chain dehydrogenases/reductases (SDR) family. As to quaternary structure, homodimer. As to expression, highly expressed level in the midgut and brain in adult females, and at lower level in the abdominal and thoracic ganglia. High levels are detected in corpora allata (CA), Malpighian tubules and fat body.

It carries out the reaction (2E,6E)-farnesol + NADP(+) = (2E,6E)-farnesal + NADPH + H(+). Functionally, mediates oxidation of farnesol into farnesal, a precursor of juvenile hormone in the corpora allata (CA), the glands that synthesize juvenile hormone. Able to oxidize C(10) to C(15) isoprenoid and aliphatic alcohols. This is Farnesol dehydrogenase from Aedes aegypti (Yellowfever mosquito).